The chain runs to 151 residues: Large ribosomal subunit protein uL15 (151 aa).

Residues 1–14 (MRREKKSRAYRGSR) show a composition bias toward basic residues. Residues 1–33 (MRREKKSRAYRGSRTHGWGRVGQHRKSGSRGGR) are disordered.

The protein belongs to the universal ribosomal protein uL15 family. In terms of assembly, part of the 50S ribosomal subunit.

In terms of biological role, binds to the 23S rRNA. In Thermofilum pendens (strain DSM 2475 / Hrk 5), this protein is Large ribosomal subunit protein uL15.